The chain runs to 178 residues: uncharacterized protein (178 aa).

Residues 7–29 (FFVIFSILWGSLFLFSIIGSLGT) traverse the membrane as a helical segment.

The protein localises to the membrane. This is an uncharacterized protein from Bacillus subtilis (strain 168).